The chain runs to 59 residues: UPF0391 membrane protein lpl2443 (59 aa).

A run of 2 helical transmembrane segments spans residues 5–25 and 30–50; these read ALIF…GIAV and IAKI…IMGL.

This sequence belongs to the UPF0391 family.

The protein localises to the cell membrane. The sequence is that of UPF0391 membrane protein lpl2443 from Legionella pneumophila (strain Lens).